We begin with the raw amino-acid sequence, 220 residues long: Elongation factor Ts, chloroplastic (220 aa).

The protein belongs to the EF-Ts family.

It is found in the plastid. The protein resides in the chloroplast. Functionally, associates with the EF-Tu.GDP complex and induces the exchange of GDP to GTP. It remains bound to the aminoacyl-tRNA.EF-Tu.GTP complex up to the GTP hydrolysis stage on the ribosome. The protein is Elongation factor Ts, chloroplastic (tsf) of Porphyra purpurea (Red seaweed).